A 123-amino-acid chain; its full sequence is Ribosome-binding factor A (123 aa).

Belongs to the RbfA family. In terms of assembly, monomer. Binds 30S ribosomal subunits, but not 50S ribosomal subunits or 70S ribosomes.

The protein resides in the cytoplasm. Functionally, one of several proteins that assist in the late maturation steps of the functional core of the 30S ribosomal subunit. Associates with free 30S ribosomal subunits (but not with 30S subunits that are part of 70S ribosomes or polysomes). Required for efficient processing of 16S rRNA. May interact with the 5'-terminal helix region of 16S rRNA. This Trichlorobacter lovleyi (strain ATCC BAA-1151 / DSM 17278 / SZ) (Geobacter lovleyi) protein is Ribosome-binding factor A.